The following is a 97-amino-acid chain: MSKLIKLTSITAVSSTLAASYYFYFVDRDGFHYQNSQWKKIGDKVQGIIDGSENINPSTPSNSNQVIVVKRPMTETMKDLWNEQIRNTANWFYSWGK.

Residues 7–24 form a helical membrane-spanning segment; that stretch reads LTSITAVSSTLAASYYFY.

It belongs to the MICOS complex subunit Mic12 family. In terms of assembly, component of the mitochondrial contact site and cristae organizing system (MICOS) complex.

The protein localises to the mitochondrion inner membrane. Its function is as follows. Component of the MICOS complex, a large protein complex of the mitochondrial inner membrane that plays crucial roles in the maintenance of crista junctions, inner membrane architecture, and formation of contact sites to the outer membrane. The protein is MICOS complex subunit MIC12 (AIM5) of Zygosaccharomyces rouxii (strain ATCC 2623 / CBS 732 / NBRC 1130 / NCYC 568 / NRRL Y-229).